Reading from the N-terminus, the 79-residue chain is D-alanyl carrier protein (79 aa).

Residues 1-77 (MSIEETVIEL…KIVQGVEELQ (77 aa)) form the Carrier domain. At serine 35 the chain carries O-(pantetheine 4'-phosphoryl)serine.

The protein belongs to the DltC family. 4'-phosphopantetheine is transferred from CoA to a specific serine of apo-DCP.

It localises to the cytoplasm. It participates in cell wall biogenesis; lipoteichoic acid biosynthesis. In terms of biological role, carrier protein involved in the D-alanylation of lipoteichoic acid (LTA). The loading of thioester-linked D-alanine onto DltC is catalyzed by D-alanine--D-alanyl carrier protein ligase DltA. The DltC-carried D-alanyl group is further transferred to cell membrane phosphatidylglycerol (PG) by forming an ester bond, probably catalyzed by DltD. D-alanylation of LTA plays an important role in modulating the properties of the cell wall in Gram-positive bacteria, influencing the net charge of the cell wall. This chain is D-alanyl carrier protein, found in Streptococcus pyogenes serotype M1.